The chain runs to 119 residues: Ribonuclease P protein component (119 aa).

The protein belongs to the RnpA family. In terms of assembly, consists of a catalytic RNA component (M1 or rnpB) and a protein subunit.

It catalyses the reaction Endonucleolytic cleavage of RNA, removing 5'-extranucleotides from tRNA precursor.. In terms of biological role, RNaseP catalyzes the removal of the 5'-leader sequence from pre-tRNA to produce the mature 5'-terminus. It can also cleave other RNA substrates such as 4.5S RNA. The protein component plays an auxiliary but essential role in vivo by binding to the 5'-leader sequence and broadening the substrate specificity of the ribozyme. This is Ribonuclease P protein component from Streptococcus pyogenes serotype M5 (strain Manfredo).